The chain runs to 428 residues: Histidinol dehydrogenase (428 aa).

NAD(+)-binding residues include tyrosine 124, glutamine 186, and asparagine 209. Substrate-binding residues include serine 233, glutamine 255, and histidine 258. Residues glutamine 255 and histidine 258 each contribute to the Zn(2+) site. Catalysis depends on proton acceptor residues glutamate 322 and histidine 323. Substrate contacts are provided by histidine 323, aspartate 356, glutamate 410, and histidine 415. Zn(2+) is bound at residue aspartate 356. Histidine 415 contacts Zn(2+).

The protein belongs to the histidinol dehydrogenase family. It depends on Zn(2+) as a cofactor.

The catalysed reaction is L-histidinol + 2 NAD(+) + H2O = L-histidine + 2 NADH + 3 H(+). It functions in the pathway amino-acid biosynthesis; L-histidine biosynthesis; L-histidine from 5-phospho-alpha-D-ribose 1-diphosphate: step 9/9. In terms of biological role, catalyzes the sequential NAD-dependent oxidations of L-histidinol to L-histidinaldehyde and then to L-histidine. This is Histidinol dehydrogenase from Bacteroides fragilis (strain ATCC 25285 / DSM 2151 / CCUG 4856 / JCM 11019 / LMG 10263 / NCTC 9343 / Onslow / VPI 2553 / EN-2).